A 62-amino-acid polypeptide reads, in one-letter code: Large ribosomal subunit protein eL24 (62 aa).

4 residues coordinate Zn(2+): Cys-6, Cys-9, Cys-32, and Cys-36. The C4-type zinc finger occupies 6–36; it reads CSFCEGKIEPGCGKKYVKKDGSVMQFCSSKC.

This sequence belongs to the eukaryotic ribosomal protein eL24 family. In terms of assembly, part of the 50S ribosomal subunit. Forms a cluster with proteins L3 and L14. It depends on Zn(2+) as a cofactor.

Binds to the 23S rRNA. The sequence is that of Large ribosomal subunit protein eL24 from Methanococcus vannielii (strain ATCC 35089 / DSM 1224 / JCM 13029 / OCM 148 / SB).